A 250-amino-acid polypeptide reads, in one-letter code: Eukaryotic translation initiation factor 3 subunit K (250 aa).

The 184-residue stretch at 46-229 (FDCYANLALL…KENEARSEVK (184 aa)) folds into the PCI domain.

It belongs to the eIF-3 subunit K family. Component of the eukaryotic translation initiation factor 3 (eIF-3) complex.

The protein localises to the cytoplasm. Component of the eukaryotic translation initiation factor 3 (eIF-3) complex, which is involved in protein synthesis of a specialized repertoire of mRNAs and, together with other initiation factors, stimulates binding of mRNA and methionyl-tRNAi to the 40S ribosome. The eIF-3 complex specifically targets and initiates translation of a subset of mRNAs involved in cell proliferation. In Emericella nidulans (strain FGSC A4 / ATCC 38163 / CBS 112.46 / NRRL 194 / M139) (Aspergillus nidulans), this protein is Eukaryotic translation initiation factor 3 subunit K.